Consider the following 339-residue polypeptide: MAPTARTPTARTRDDRRATTRTARLRTRIPEPDEEPDLLGQYLTQIGATPLLTAEDEVRLATRIEAGVRAREELETADTGEPAPTPRRRRTLEETVHDGQEAKDHMVRANLRLVVSMAKRHAHRGLPLLDVIQEGNLGLIRAVEKFDHTKGFKFSTYATWWIRQAIERGLATHARTVRLPVHVVEQLQKLAKVERKLRAGLDREPTTEEVAAESGIDVDKVVWLRRVGRDAVSLDTPVDETGDTVVGDLIPDTEVLRAPEVAEFQALAAELREAVGTLAPRESLILSLRYGLHDGRPRTLQQVAQHVGLTRERVRQLEKESLAHLRAPENRERLLDWAS.

The span at 1–10 shows a compositional bias: low complexity; the sequence is MAPTARTPTA. Disordered regions lie at residues 1–37 and 71–101; these read MAPTARTPTARTRDDRRATTRTARLRTRIPEPDEEPD and REELETADTGEPAPTPRRRRTLEETVHDGQE. The segment covering 91–101 has biased composition (basic and acidic residues); that stretch reads TLEETVHDGQE. The Polymerase core binding signature appears at 130–143; sequence DVIQEGNLGLIRAV. The segment at residues 300 to 319 is a DNA-binding region (H-T-H motif); the sequence is LQQVAQHVGLTRERVRQLEK.

The protein belongs to the sigma-70 factor family. Interacts transiently with the RNA polymerase catalytic core.

In terms of biological role, sigma factors are initiation factors that promote the attachment of RNA polymerase to specific initiation sites and are then released. The sequence is that of RNA polymerase principal sigma factor HrdC (hrdC) from Streptomyces coelicolor (strain ATCC BAA-471 / A3(2) / M145).